The chain runs to 969 residues: Activity-dependent neuroprotective protein a (969 aa).

A C2H2-type 1 zinc finger spans residues 74–97; the sequence is FCCSDCPFASKYFSAYKNHFRNVH. The C2H2-type 2; atypical zinc finger occupies 107–129; the sequence is LNCSYCTYSGNKRTLETHVRLFH. C2H2-type zinc fingers lie at residues 169 to 192 and 221 to 244; these read YYCKKCTYRDRLYNVVRRHIYREH and IHCKSCHFTPRSYEALVQHVIEFH. Residues 401–423 form a C2H2-type 5; atypical zinc finger; the sequence is KICTICNELFPESAYSAHFEKEH. Residues 443–464 form a C2H2-type 6; atypical zinc finger; it reads SKCLYCNRYLPSDSLLNHMLVH. A C2H2-type 7 zinc finger spans residues 466–489; that stretch reads LSCPHCHSTFHEVEKIVAHNRLAH. The C2H2-type 8; atypical zinc finger occupies 583 to 608; the sequence is TLCPLCFTILKGPISDALAHHLRDSH. The C2H2-type 9; atypical zinc finger occupies 623-647; that stretch reads YKCIHCLGVYTSNMTASTITLHLVH. Residues 659-689 are disordered; that stretch reads KPITTGLRSPGAGSLKRELVTPDPSDPKRRK. A DNA-binding region (homeobox) is located at residues 732–774; that stretch reads AYFNRHPYPSQREVEKLAASLWLWKSDVASHFGNHRRLCDRDF. The tract at residues 911-949 is disordered; sequence DVRANRSSPRVGPKVLDGSVSSSSPDEATWSGNMSSEES. Over residues 929–946 the composition is skewed to polar residues; it reads SVSSSSPDEATWSGNMSS.

Interacts with catenin beta-1/ctnnb1.

Its subcellular location is the nucleus. Its function is as follows. May be involved in transcriptional regulation. Positively modulates wnt-beta-catenin/ctnnb1 signaling. Required for embryonic neurogenesis. Required for progression through late erythroid differentiation. The polypeptide is Activity-dependent neuroprotective protein a (Danio rerio (Zebrafish)).